The sequence spans 484 residues: HSPB1-associated protein 1 (484 aa).

Residues 1–26 form a disordered region; that stretch reads MAARPGAITNADSASGGGEEEGKHVK. The tract at residues 88-208 is interaction with HSPB1; it reads ETACNYVEAT…EDTPFLYPTR (121 aa). The JmjC domain occupies 124 to 288; the sequence is WAYADYKYFV…HQTRVEEAIT (165 aa). The interval 396 to 429 is disordered; the sequence is TPSSEEPSSERGGIFENDGEDFVSKNGKSFGKRQ.

Interacts with CRYAB and HSPB1.

It localises to the cytoplasm. In terms of biological role, may play a role in cellular stress response. In Bos taurus (Bovine), this protein is HSPB1-associated protein 1 (HSPBAP1).